We begin with the raw amino-acid sequence, 322 residues long: Methionyl-tRNA formyltransferase (322 aa).

Residue 112–115 (SLLP) participates in (6S)-5,6,7,8-tetrahydrofolate binding.

The protein belongs to the Fmt family.

It catalyses the reaction L-methionyl-tRNA(fMet) + (6R)-10-formyltetrahydrofolate = N-formyl-L-methionyl-tRNA(fMet) + (6S)-5,6,7,8-tetrahydrofolate + H(+). In terms of biological role, attaches a formyl group to the free amino group of methionyl-tRNA(fMet). The formyl group appears to play a dual role in the initiator identity of N-formylmethionyl-tRNA by promoting its recognition by IF2 and preventing the misappropriation of this tRNA by the elongation apparatus. The chain is Methionyl-tRNA formyltransferase from Synechococcus sp. (strain JA-3-3Ab) (Cyanobacteria bacterium Yellowstone A-Prime).